The primary structure comprises 95 residues: Synaptobrevin-A (95 aa).

Residues 1-70 (MSEPVNKVKQ…KRLMWCRNIK (70 aa)) lie on the Cytoplasmic side of the membrane. Positions 7-67 (KVKQTQQQVD…NEIKRLMWCR (61 aa)) constitute a v-SNARE coiled-coil homology domain. The helical; Anchor for type IV membrane protein transmembrane segment at 71-91 (LTLIIIAVVVLLLVVIIVPIV) threads the bilayer. The Vesicular segment spans residues 92–95 (LKFT).

It belongs to the synaptobrevin family.

It is found in the cytoplasmic vesicle. It localises to the secretory vesicle membrane. Functionally, involved in the targeting and/or fusion of transport vesicles to their target membrane. The protein is Synaptobrevin-A (sybA) of Dictyostelium discoideum (Social amoeba).